The following is a 361-amino-acid chain: Peptide chain release factor 1 (361 aa).

Residue Gln-235 is modified to N5-methylglutamine. The tract at residues 288-307 (AAEAQTRKLQVGSGDRSQRI) is disordered.

Belongs to the prokaryotic/mitochondrial release factor family. In terms of processing, methylated by PrmC. Methylation increases the termination efficiency of RF1.

It is found in the cytoplasm. Functionally, peptide chain release factor 1 directs the termination of translation in response to the peptide chain termination codons UAG and UAA. In Xanthomonas axonopodis pv. citri (strain 306), this protein is Peptide chain release factor 1.